The chain runs to 397 residues: Alpha-lytic protease (397 aa).

Residues 1–24 (MYVSNHRSRRVARVSVSCLVAALA) form the signal peptide. The propeptide occupies 25–199 (AMSCGAALAA…ESSPGKLQTT (175 aa)). Cys216 and Cys236 are joined by a disulfide. Catalysis depends on charge relay system residues His235 and Asp262. 2 disulfide bridges follow: Cys300-Cys310 and Cys336-Cys369. Residue Ser342 is the Charge relay system of the active site.

It belongs to the peptidase S1 family.

It catalyses the reaction Preferential cleavage: Ala-|-Xaa, Val-|-Xaa in bacterial cell walls, elastin and other proteins.. This chain is Alpha-lytic protease (alpha-LP), found in Lysobacter enzymogenes.